Here is a 422-residue protein sequence, read N- to C-terminus: Serine--tRNA ligase (422 aa).

231–233 contacts L-serine; it reads TGE. An ATP-binding site is contributed by 262 to 264; it reads RQE. Residue Glu-285 coordinates L-serine. Position 349–352 (349–352) interacts with ATP; it reads EISS. Ser-384 serves as a coordination point for L-serine.

The protein belongs to the class-II aminoacyl-tRNA synthetase family. Type-1 seryl-tRNA synthetase subfamily. Homodimer. The tRNA molecule binds across the dimer.

The protein localises to the cytoplasm. The enzyme catalyses tRNA(Ser) + L-serine + ATP = L-seryl-tRNA(Ser) + AMP + diphosphate + H(+). It catalyses the reaction tRNA(Sec) + L-serine + ATP = L-seryl-tRNA(Sec) + AMP + diphosphate + H(+). Its pathway is aminoacyl-tRNA biosynthesis; selenocysteinyl-tRNA(Sec) biosynthesis; L-seryl-tRNA(Sec) from L-serine and tRNA(Sec): step 1/1. In terms of biological role, catalyzes the attachment of serine to tRNA(Ser). Is also able to aminoacylate tRNA(Sec) with serine, to form the misacylated tRNA L-seryl-tRNA(Sec), which will be further converted into selenocysteinyl-tRNA(Sec). The polypeptide is Serine--tRNA ligase (Mesoplasma florum (strain ATCC 33453 / NBRC 100688 / NCTC 11704 / L1) (Acholeplasma florum)).